Consider the following 171-residue polypeptide: PRA1-like protein (171 aa).

Helical transmembrane passes span 67–87, 119–139, and 140–160; these read AIIA…LIVI, VILA…ETII, and WLVG…EPPV.

The protein belongs to the PRA1 family.

The protein localises to the membrane. This Schizosaccharomyces pombe (strain 972 / ATCC 24843) (Fission yeast) protein is PRA1-like protein.